Consider the following 467-residue polypeptide: Histone acetyltransferase type B catalytic subunit (467 aa).

Residues 1-24 form a disordered region; the sequence is MVQKQQASAGPGTEPKKRRRVGFS. Acetyl-CoA-binding positions include 249–251 and 256–262; these read ILV and QGKGLGS. The Proton donor/acceptor role is filled by Glu-283.

Belongs to the HAT1 family.

It localises to the nucleus. Its subcellular location is the cytoplasm. It carries out the reaction L-lysyl-[protein] + acetyl-CoA = N(6)-acetyl-L-lysyl-[protein] + CoA + H(+). Functionally, acetylates soluble but not nucleosomal H4. Acetylates 'Lys-12' of histone H4. This is Histone acetyltransferase type B catalytic subunit (HAG2) from Arabidopsis thaliana (Mouse-ear cress).